The chain runs to 500 residues: Probable cytosol aminopeptidase (500 aa).

Positions 261 and 266 each coordinate Mn(2+). The active site involves lysine 273. Mn(2+) is bound by residues aspartate 284, aspartate 343, and glutamate 345. Arginine 347 is a catalytic residue.

The protein belongs to the peptidase M17 family. Requires Mn(2+) as cofactor.

It is found in the cytoplasm. It catalyses the reaction Release of an N-terminal amino acid, Xaa-|-Yaa-, in which Xaa is preferably Leu, but may be other amino acids including Pro although not Arg or Lys, and Yaa may be Pro. Amino acid amides and methyl esters are also readily hydrolyzed, but rates on arylamides are exceedingly low.. The catalysed reaction is Release of an N-terminal amino acid, preferentially leucine, but not glutamic or aspartic acids.. Its function is as follows. Presumably involved in the processing and regular turnover of intracellular proteins. Catalyzes the removal of unsubstituted N-terminal amino acids from various peptides. This Wolbachia pipientis wMel protein is Probable cytosol aminopeptidase.